The primary structure comprises 124 residues: Large ribosomal subunit protein bL12 (124 aa).

The protein belongs to the bacterial ribosomal protein bL12 family. Homodimer. Part of the ribosomal stalk of the 50S ribosomal subunit. Forms a multimeric L10(L12)X complex, where L10 forms an elongated spine to which 2 to 4 L12 dimers bind in a sequential fashion. Binds GTP-bound translation factors.

In terms of biological role, forms part of the ribosomal stalk which helps the ribosome interact with GTP-bound translation factors. Is thus essential for accurate translation. This is Large ribosomal subunit protein bL12 from Anaeromyxobacter dehalogenans (strain 2CP-C).